A 395-amino-acid polypeptide reads, in one-letter code: Succinyl-diaminopimelate desuccinylase (395 aa).

Residue H74 coordinates Zn(2+). Residue D76 is part of the active site. A Zn(2+)-binding site is contributed by D107. E141 acts as the Proton acceptor in catalysis. Residues E142, E170, and H368 each contribute to the Zn(2+) site.

This sequence belongs to the peptidase M20A family. DapE subfamily. In terms of assembly, homodimer. Zn(2+) serves as cofactor. Co(2+) is required as a cofactor.

The catalysed reaction is N-succinyl-(2S,6S)-2,6-diaminopimelate + H2O = (2S,6S)-2,6-diaminopimelate + succinate. It functions in the pathway amino-acid biosynthesis; L-lysine biosynthesis via DAP pathway; LL-2,6-diaminopimelate from (S)-tetrahydrodipicolinate (succinylase route): step 3/3. Catalyzes the hydrolysis of N-succinyl-L,L-diaminopimelic acid (SDAP), forming succinate and LL-2,6-diaminopimelate (DAP), an intermediate involved in the bacterial biosynthesis of lysine and meso-diaminopimelic acid, an essential component of bacterial cell walls. The polypeptide is Succinyl-diaminopimelate desuccinylase (Brucella melitensis biotype 2 (strain ATCC 23457)).